We begin with the raw amino-acid sequence, 346 residues long: MSSSKVAVVTGTNSNLGLNIVYRLIERSEPEDNLTIVVTSRTLPRVRECIDLIKAFVNTINRTGSVDYDYLLVDFTNMISILDAHYSLSKRYDHINYFFVNAAQGVYSGIDWLGAVKEVFSSPLEAVTNPTYKIQRVGVKSKDGMGLVFQANVFGPYYLIQKLLPLLQAGQGTVVWVSSIMSAPKYLSLQDIQLLESDVSYEGSKRLVDLLHSATYKEMKKLGIRQYLTHPGIFTSLSFFQYLNVFTYYGMLFLFYLARWIGSPWHNIQGYKAANAPVYVATMANPHFEKEQMKYGSATFRDGLEYIKTDEVDTTGCEDVYKYISNLKLQWDEKLKDQIKPTRIPL.

3 residues coordinate NADP(+): leucine 16, threonine 39, and arginine 45. Active-site proton donor residues include serine 178 and tyrosine 201. The NADP(+) site is built by tyrosine 201, lysine 205, and serine 236. The active-site Lowers pKa of active site Tyr is the lysine 205.

It belongs to the short-chain dehydrogenases/reductases (SDR) family. ERG27 subfamily.

The catalysed reaction is a 3beta-hydroxysteroid + NADP(+) = a 3-oxosteroid + NADPH + H(+). It participates in steroid biosynthesis; zymosterol biosynthesis; zymosterol from lanosterol: step 5/6. Its function is as follows. Responsible for the reduction of the keto group on the C-3 of sterols. This Kluyveromyces lactis (strain ATCC 8585 / CBS 2359 / DSM 70799 / NBRC 1267 / NRRL Y-1140 / WM37) (Yeast) protein is 3-keto-steroid reductase (ERG27).